Consider the following 239-residue polypeptide: Adapter protein MecA (239 aa).

Residues 118–128 are compositionally biased toward basic and acidic residues; that stretch reads EQRTKEKEAQG. Residues 118 to 137 are disordered; it reads EQRTKEKEAQGSKRQKSSAR.

Belongs to the MecA family. As to quaternary structure, homodimer.

Its function is as follows. Enables the recognition and targeting of unfolded and aggregated proteins to the ClpC protease or to other proteins involved in proteolysis. In Staphylococcus aureus (strain JH1), this protein is Adapter protein MecA.